Here is a 260-residue protein sequence, read N- to C-terminus: 3-oxoadipate CoA-transferase subunit B (260 aa).

The active site involves Glu51.

This sequence belongs to the 3-oxoacid CoA-transferase subunit B family. Heterotetramer composed of 2 A and 2 B subunits.

It carries out the reaction 3-oxoadipate + succinyl-CoA = 3-oxoadipyl-CoA + succinate. It participates in aromatic compound metabolism; beta-ketoadipate pathway; acetyl-CoA and succinyl-CoA from 3-oxoadipate: step 1/2. The sequence is that of 3-oxoadipate CoA-transferase subunit B (catJ) from Pseudomonas knackmussii (strain DSM 6978 / CCUG 54928 / LMG 23759 / B13).